We begin with the raw amino-acid sequence, 177 residues long: Large ribosomal subunit protein uL6 (177 aa).

Belongs to the universal ribosomal protein uL6 family. In terms of assembly, part of the 50S ribosomal subunit.

Its function is as follows. This protein binds to the 23S rRNA, and is important in its secondary structure. It is located near the subunit interface in the base of the L7/L12 stalk, and near the tRNA binding site of the peptidyltransferase center. The polypeptide is Large ribosomal subunit protein uL6 (Rickettsia massiliae (strain Mtu5)).